We begin with the raw amino-acid sequence, 158 residues long: MPLTHLNEENQPKMVDIGDKETTERIALASGRISMNKEAYDAIINHGVKKGPVLQTAIIAGIMAAKKTSELIPMCHPIMLNGVDIDILEEKETCSFKLYARVKTQAKTGVEMEALMSVSIGLLTIYDMVKVIDKSMTISGVMLEHKSGGKSGDYNAKK.

Substrate contacts are provided by residues 74–76 (MCH) and 112–113 (ME). Aspartate 127 is a catalytic residue.

It belongs to the MoaC family. As to quaternary structure, homohexamer; trimer of dimers.

It catalyses the reaction (8S)-3',8-cyclo-7,8-dihydroguanosine 5'-triphosphate = cyclic pyranopterin phosphate + diphosphate. Its pathway is cofactor biosynthesis; molybdopterin biosynthesis. Catalyzes the conversion of (8S)-3',8-cyclo-7,8-dihydroguanosine 5'-triphosphate to cyclic pyranopterin monophosphate (cPMP). The sequence is that of Cyclic pyranopterin monophosphate synthase from Helicobacter pylori (strain J99 / ATCC 700824) (Campylobacter pylori J99).